Consider the following 264-residue polypeptide: Thymidylate synthase (264 aa).

Residue R21 coordinates dUMP. Residue H51 coordinates (6R)-5,10-methylene-5,6,7,8-tetrahydrofolate. 126–127 (RR) contacts dUMP. C146 functions as the Nucleophile in the catalytic mechanism. DUMP contacts are provided by residues 166–169 (RSAD), N177, and 207–209 (HIY). D169 is a binding site for (6R)-5,10-methylene-5,6,7,8-tetrahydrofolate. A263 is a binding site for (6R)-5,10-methylene-5,6,7,8-tetrahydrofolate.

Belongs to the thymidylate synthase family. Bacterial-type ThyA subfamily. Homodimer.

It localises to the cytoplasm. The catalysed reaction is dUMP + (6R)-5,10-methylene-5,6,7,8-tetrahydrofolate = 7,8-dihydrofolate + dTMP. Its pathway is pyrimidine metabolism; dTTP biosynthesis. Its function is as follows. Catalyzes the reductive methylation of 2'-deoxyuridine-5'-monophosphate (dUMP) to 2'-deoxythymidine-5'-monophosphate (dTMP) while utilizing 5,10-methylenetetrahydrofolate (mTHF) as the methyl donor and reductant in the reaction, yielding dihydrofolate (DHF) as a by-product. This enzymatic reaction provides an intracellular de novo source of dTMP, an essential precursor for DNA biosynthesis. The sequence is that of Thymidylate synthase from Rhizobium meliloti (strain 1021) (Ensifer meliloti).